A 95-amino-acid polypeptide reads, in one-letter code: Large ribosomal subunit protein bL25 (95 aa).

The protein belongs to the bacterial ribosomal protein bL25 family. Part of the 50S ribosomal subunit; part of the 5S rRNA/L5/L18/L25 subcomplex. Contacts the 5S rRNA. Binds to the 5S rRNA independently of L5 and L18.

In terms of biological role, this is one of the proteins that binds to the 5S RNA in the ribosome where it forms part of the central protuberance. The protein is Large ribosomal subunit protein bL25 of Chromobacterium violaceum (strain ATCC 12472 / DSM 30191 / JCM 1249 / CCUG 213 / NBRC 12614 / NCIMB 9131 / NCTC 9757 / MK).